The following is a 123-amino-acid chain: Maintenance of telomere capping protein 3, mitochondrial (123 aa).

The transit peptide at 1–37 (MMGRNGIRLALKRSFSTYQPPVVEITNITKLWPTLRP) directs the protein to the mitochondrion.

The protein resides in the mitochondrion. In terms of biological role, may be involved in telomere capping. The sequence is that of Maintenance of telomere capping protein 3, mitochondrial (MTC3) from Saccharomyces cerevisiae (strain ATCC 204508 / S288c) (Baker's yeast).